Reading from the N-terminus, the 410-residue chain is Peptidase T (410 aa).

Residue His79 coordinates Zn(2+). The active site involves Asp81. A Zn(2+)-binding site is contributed by Asp142. Residue Glu176 is the Proton acceptor of the active site. Zn(2+) is bound by residues Glu177, Asp199, and His381.

The protein belongs to the peptidase M20B family. Zn(2+) is required as a cofactor.

The protein resides in the cytoplasm. It carries out the reaction Release of the N-terminal residue from a tripeptide.. Its function is as follows. Cleaves the N-terminal amino acid of tripeptides. In Bacillus licheniformis (strain ATCC 14580 / DSM 13 / JCM 2505 / CCUG 7422 / NBRC 12200 / NCIMB 9375 / NCTC 10341 / NRRL NRS-1264 / Gibson 46), this protein is Peptidase T.